A 261-amino-acid polypeptide reads, in one-letter code: 3-deoxy-manno-octulosonate cytidylyltransferase (261 aa).

It belongs to the KdsB family.

It localises to the cytoplasm. The catalysed reaction is 3-deoxy-alpha-D-manno-oct-2-ulosonate + CTP = CMP-3-deoxy-beta-D-manno-octulosonate + diphosphate. Its pathway is nucleotide-sugar biosynthesis; CMP-3-deoxy-D-manno-octulosonate biosynthesis; CMP-3-deoxy-D-manno-octulosonate from 3-deoxy-D-manno-octulosonate and CTP: step 1/1. It participates in bacterial outer membrane biogenesis; lipopolysaccharide biosynthesis. Its function is as follows. Activates KDO (a required 8-carbon sugar) for incorporation into bacterial lipopolysaccharide in Gram-negative bacteria. The sequence is that of 3-deoxy-manno-octulosonate cytidylyltransferase from Dechloromonas aromatica (strain RCB).